We begin with the raw amino-acid sequence, 224 residues long: Ribonuclease T (224 aa).

In terms of domain architecture, Exonuclease spans 32–206 (VVVDVETGGF…YDTEKTAELF (175 aa)). Mg(2+)-binding residues include aspartate 35, glutamate 37, histidine 193, and aspartate 198. Histidine 193 serves as the catalytic Proton donor/acceptor.

The protein belongs to the RNase T family. Homodimer. It depends on Mg(2+) as a cofactor.

Trims short 3' overhangs of a variety of RNA species, leaving a one or two nucleotide 3' overhang. Responsible for the end-turnover of tRNA: specifically removes the terminal AMP residue from uncharged tRNA (tRNA-C-C-A). Also appears to be involved in tRNA biosynthesis. This chain is Ribonuclease T, found in Pseudomonas paraeruginosa (strain DSM 24068 / PA7) (Pseudomonas aeruginosa (strain PA7)).